The following is a 267-amino-acid chain: Tryptophan synthase alpha chain (267 aa).

Catalysis depends on proton acceptor residues glutamate 49 and aspartate 60.

Belongs to the TrpA family. As to quaternary structure, tetramer of two alpha and two beta chains.

It catalyses the reaction (1S,2R)-1-C-(indol-3-yl)glycerol 3-phosphate + L-serine = D-glyceraldehyde 3-phosphate + L-tryptophan + H2O. It functions in the pathway amino-acid biosynthesis; L-tryptophan biosynthesis; L-tryptophan from chorismate: step 5/5. Its function is as follows. The alpha subunit is responsible for the aldol cleavage of indoleglycerol phosphate to indole and glyceraldehyde 3-phosphate. The polypeptide is Tryptophan synthase alpha chain (Acinetobacter baylyi (strain ATCC 33305 / BD413 / ADP1)).